Consider the following 230-residue polypeptide: 3-beta-hydroxysteroid-Delta(8),Delta(7)-isomerase (230 aa).

The residue at position 2 (threonine 2) is an N-acetylthreonine. The next 4 membrane-spanning stretches (helical) occupy residues 29 to 49, 66 to 86, 121 to 141, and 185 to 205; these read WHIL…TWLL, LCWF…FVLY, METI…IAFL, and FWFY…VLVL. One can recognise an EXPERA domain in the interval 61-204; it reads WRRLSLCWFA…LWLVLPGVLV (144 aa).

This sequence belongs to the EBP family.

It localises to the endoplasmic reticulum membrane. The protein resides in the nucleus envelope. It is found in the cytoplasmic vesicle. The enzyme catalyses lathosterol = 5alpha-cholest-8-en-3beta-ol. It catalyses the reaction zymosterol = 5alpha-cholesta-7,24-dien-3beta-ol. The catalysed reaction is 5,6alpha-epoxy-5alpha-cholestan-3beta-ol + H2O = 5alpha-cholestane-3beta,5,6beta-triol. It carries out the reaction 5,6beta-epoxy-5beta-cholestan-3beta-ol + H2O = 5alpha-cholestane-3beta,5,6beta-triol. The protein operates within steroid biosynthesis; cholesterol biosynthesis. With respect to regulation, cholestenol Delta-isomerase and cholesterol-5,6-epoxide hydrolase (ChEH) activities are inhibited by tamoxifen and the selective AEBS ligand (4-benzyl-phenoxy)-ethyl-N-pyrrolidine (PBPE). ChEH activity is inhibited by oleic acid. Functionally, isomerase that catalyzes the conversion of Delta(8)-sterols to their corresponding Delta(7)-isomers a catalytic step in the postlanosterol biosynthesis of cholesterol. In terms of biological role, component of the microsomal antiestrogen binding site (AEBS), a multiproteic complex at the ER membrane that consists of an association between EBP and 7-dehydrocholesterol reductase/DHCR7. This complex is responsible for cholesterol-5,6-epoxide hydrolase (ChEH) activity, which consists in the hydration of cholesterol-5,6-epoxides (5,6-EC) into cholestane-3beta,5alpha,6beta-triol (CT). The precise role of each component of this complex has not been described yet. The polypeptide is 3-beta-hydroxysteroid-Delta(8),Delta(7)-isomerase (Homo sapiens (Human)).